The chain runs to 125 residues: Large ribosomal subunit protein bL19 (125 aa).

This sequence belongs to the bacterial ribosomal protein bL19 family.

Functionally, this protein is located at the 30S-50S ribosomal subunit interface and may play a role in the structure and function of the aminoacyl-tRNA binding site. The polypeptide is Large ribosomal subunit protein bL19 (Ehrlichia canis (strain Jake)).